A 96-amino-acid chain; its full sequence is NADH-quinone oxidoreductase subunit K (96 aa).

The next 3 helical transmembrane spans lie at 1–21, 25–45, and 56–76; these read MNYIVLAAIVFTIGAVGVLVR, IIVFMCVELMLNACNLAFVAF, and VIAFFVMVVAAAEVVVGLAII.

It belongs to the complex I subunit 4L family. NDH-1 is composed of 14 different subunits. Subunits NuoA, H, J, K, L, M, N constitute the membrane sector of the complex.

Its subcellular location is the cell membrane. It catalyses the reaction a quinone + NADH + 5 H(+)(in) = a quinol + NAD(+) + 4 H(+)(out). NDH-1 shuttles electrons from NADH, via FMN and iron-sulfur (Fe-S) centers, to quinones in the respiratory chain. The immediate electron acceptor for the enzyme in this species is believed to be a menaquinone. Couples the redox reaction to proton translocation (for every two electrons transferred, four hydrogen ions are translocated across the cytoplasmic membrane), and thus conserves the redox energy in a proton gradient. In Thermobifida fusca (strain YX), this protein is NADH-quinone oxidoreductase subunit K.